Reading from the N-terminus, the 448-residue chain is tRNA modification GTPase MnmE (448 aa).

The (6S)-5-formyl-5,6,7,8-tetrahydrofolate site is built by Arg24, Glu81, and Lys120. A TrmE-type G domain is found at 216–373 (GLNVVLVGAP…LKRTLLREAG (158 aa)). K(+) is bound at residue Asn226. GTP contacts are provided by residues 226–231 (NVGKSS), 245–251 (TDIAGTT), and 270–273 (DTAG). Ser230 is a binding site for Mg(2+). K(+) contacts are provided by Thr245, Ile247, and Thr250. Mg(2+) is bound at residue Thr251. Lys448 serves as a coordination point for (6S)-5-formyl-5,6,7,8-tetrahydrofolate.

The protein belongs to the TRAFAC class TrmE-Era-EngA-EngB-Septin-like GTPase superfamily. TrmE GTPase family. Homodimer. Heterotetramer of two MnmE and two MnmG subunits. K(+) is required as a cofactor.

The protein localises to the cytoplasm. In terms of biological role, exhibits a very high intrinsic GTPase hydrolysis rate. Involved in the addition of a carboxymethylaminomethyl (cmnm) group at the wobble position (U34) of certain tRNAs, forming tRNA-cmnm(5)s(2)U34. The chain is tRNA modification GTPase MnmE from Neisseria meningitidis serogroup C (strain 053442).